Here is a 104-residue protein sequence, read N- to C-terminus: Vesicle-associated membrane protein 3 (104 aa).

The disordered stretch occupies residues 1–23 (MTTNAPAGSSAAAGSSRRLQQTQ). The Cytoplasmic portion of the chain corresponds to 1-81 (MTTNAPAGSS…KRKYWWKNCK (81 aa)). The span at 7–16 (AGSSAAAGSS) shows a compositional bias: low complexity. The v-SNARE coiled-coil homology domain occupies 18–78 (RLQQTQNQVD…AKLKRKYWWK (61 aa)). Residues Lys70, Lys72, and Lys81 each participate in a glycyl lysine isopeptide (Lys-Gly) (interchain with G-Cter in ubiquitin) cross-link. Residues 82 to 102 (MWAIGITVVVIIIIIIVVWSI) traverse the membrane as a helical; Anchor for type IV membrane protein segment. The Vesicular segment spans residues 103–104 (SS).

The protein belongs to the synaptobrevin family. Interacts with POPDC1 (via the C-terminus cytoplasmic tail). Interacts with BCAP31; involved in VAMP3 export from the endoplasmic reticulum. Interacts with BAIAP3; this interaction is increased in the presence of calcium. Interacts with PICALM. Post-translationally, ubiquitinated by RNF167 at Lys-70, Lys-72 and Lys-81, regulating the recycling endosome pathway.

The protein resides in the early endosome membrane. It localises to the recycling endosome membrane. The protein localises to the synapse. Its subcellular location is the synaptosome. In terms of biological role, SNARE involved in vesicular transport from the late endosomes to the trans-Golgi network. This is Vesicle-associated membrane protein 3 (VAMP3) from Bos taurus (Bovine).